The sequence spans 329 residues: Transcription factor MYB2 (329 aa).

HTH myb-type domains lie at 17–69 (GGDL…LNYL) and 70–124 (RPDL…QKHA). 2 DNA-binding regions (H-T-H motif) span residues 45–69 (WNSLARSAGLKRTGKSCRLRWLNYL) and 97–120 (WSKIAQHLPGRTDNEIKNYWRTRV). Composition is skewed to low complexity over residues 155–166 (AAAGQQQQQEGG) and 217–235 (LSSTTAGSSSLSTDSGAGA). Disordered stretches follow at residues 155 to 189 (AAAGQQQQQEGGTDTPPLSWQHGGSDGLYESPELP) and 206 to 242 (GAQSGGTPAPELSSTTAGSSSLSTDSGAGAQPSWPTQ).

Highly expressed in leaves. Expressed in roots and shoots. Expressed at low levels in flowers.

Its subcellular location is the nucleus. Its function is as follows. Transcription factor involved in abiotic stress responses. Plays a regulatory role in tolerance to salt, cold, and drought stresses. Positively regulates the expression of genes involved in proline synthesis and transport, and genes involved in reactive oxygen species (ROS) scavenging such as peroxidase, superoxide dismutase and catalase during salt stress. Transactivates stress-related genes, including LEA3, RAB16A and DREB2A during salt stress. This chain is Transcription factor MYB2, found in Oryza sativa subsp. japonica (Rice).